We begin with the raw amino-acid sequence, 259 residues long: tRNA (guanine-N(7)-)-methyltransferase (259 aa).

Positions 1–11 (MSNTDNSDKNT) are enriched in basic and acidic residues. A disordered region spans residues 1–29 (MSNTDNSDKNTKPTGYRPPQTDFNTEFGN). S-adenosyl-L-methionine is bound by residues Glu-89, Glu-114, Asp-141, and Asp-164. The active site involves Asp-164. Residues Lys-168, Asp-200, and 238-241 (TKFE) each bind substrate.

Belongs to the class I-like SAM-binding methyltransferase superfamily. TrmB family.

The catalysed reaction is guanosine(46) in tRNA + S-adenosyl-L-methionine = N(7)-methylguanosine(46) in tRNA + S-adenosyl-L-homocysteine. Its pathway is tRNA modification; N(7)-methylguanine-tRNA biosynthesis. Its function is as follows. Catalyzes the formation of N(7)-methylguanine at position 46 (m7G46) in tRNA. In Corynebacterium diphtheriae (strain ATCC 700971 / NCTC 13129 / Biotype gravis), this protein is tRNA (guanine-N(7)-)-methyltransferase.